The sequence spans 210 residues: Glycerol-3-phosphate acyltransferase 2 (210 aa).

A run of 6 helical transmembrane segments spans residues 4-24 (LIMV…PAPY), 54-74 (FWPG…AMAV), 82-102 (LGIQ…PVWL), 114-134 (IGIL…CFLV), 141-161 (FPTL…WLGQ), and 163-183 (DLGK…MYIP).

Belongs to the PlsY family. Probably interacts with PlsX.

The protein localises to the cell membrane. It carries out the reaction an acyl phosphate + sn-glycerol 3-phosphate = a 1-acyl-sn-glycero-3-phosphate + phosphate. The protein operates within lipid metabolism; phospholipid metabolism. Catalyzes the transfer of an acyl group from acyl-phosphate (acyl-PO(4)) to glycerol-3-phosphate (G3P) to form lysophosphatidic acid (LPA). This enzyme utilizes acyl-phosphate as fatty acyl donor, but not acyl-CoA or acyl-ACP. The chain is Glycerol-3-phosphate acyltransferase 2 from Dehalococcoides mccartyi (strain ATCC BAA-2266 / KCTC 15142 / 195) (Dehalococcoides ethenogenes (strain 195)).